The chain runs to 135 residues: MRGDRSDRLMKKEIFNLNRHLPSRRKTLEELLREDRPHVTGADGTRHRFKWAELEDLRGMLTEDEARRLRLPIYIEIESETSGARIAGDIEVKVVSEVLERDDEGDEIYIYRPEMRVLRARFPTVTQYMFLVREL.

This sequence belongs to the UPF0216 family.

This Methanothermobacter thermautotrophicus (strain ATCC 29096 / DSM 1053 / JCM 10044 / NBRC 100330 / Delta H) (Methanobacterium thermoautotrophicum) protein is UPF0216 protein MTH_949.